Reading from the N-terminus, the 520-residue chain is Cation efflux system protein CzcB (520 aa).

The tract at residues serine 28–serine 85 is disordered. The segment covering alanine 32–lysine 76 has biased composition (basic and acidic residues).

This sequence belongs to the membrane fusion protein (MFP) (TC 8.A.1) family.

Its function is as follows. CzcA and CzcB together would act in zinc efflux nearly as effectively as the complete czc efflux system (CzcABC). The CzcB protein is thought to funnel zinc cations to the CzcA transport protein. The polypeptide is Cation efflux system protein CzcB (czcB) (Alcaligenes sp. (strain CT14)).